Reading from the N-terminus, the 383-residue chain is Dual-specificity RNA methyltransferase RlmN (383 aa).

The active-site Proton acceptor is Glu-93. The Radical SAM core domain maps to 99–339 (EETRGTLCVS…TTIRKTRGDD (241 aa)). Cys-106 and Cys-344 are disulfide-bonded. Residues Cys-113, Cys-117, and Cys-120 each coordinate [4Fe-4S] cluster. S-adenosyl-L-methionine is bound by residues 170-171 (GE), Ser-202, 224-226 (SLH), and Asn-301. Cys-344 (S-methylcysteine intermediate) is an active-site residue.

This sequence belongs to the radical SAM superfamily. RlmN family. The cofactor is [4Fe-4S] cluster.

It is found in the cytoplasm. The catalysed reaction is adenosine(2503) in 23S rRNA + 2 reduced [2Fe-2S]-[ferredoxin] + 2 S-adenosyl-L-methionine = 2-methyladenosine(2503) in 23S rRNA + 5'-deoxyadenosine + L-methionine + 2 oxidized [2Fe-2S]-[ferredoxin] + S-adenosyl-L-homocysteine. It catalyses the reaction adenosine(37) in tRNA + 2 reduced [2Fe-2S]-[ferredoxin] + 2 S-adenosyl-L-methionine = 2-methyladenosine(37) in tRNA + 5'-deoxyadenosine + L-methionine + 2 oxidized [2Fe-2S]-[ferredoxin] + S-adenosyl-L-homocysteine. Functionally, specifically methylates position 2 of adenine 2503 in 23S rRNA and position 2 of adenine 37 in tRNAs. m2A2503 modification seems to play a crucial role in the proofreading step occurring at the peptidyl transferase center and thus would serve to optimize ribosomal fidelity. This Ralstonia nicotianae (strain ATCC BAA-1114 / GMI1000) (Ralstonia solanacearum) protein is Dual-specificity RNA methyltransferase RlmN.